A 190-amino-acid polypeptide reads, in one-letter code: NADH dehydrogenase [ubiquinone] iron-sulfur protein 3 (190 aa).

The protein belongs to the complex I 30 kDa subunit family. In terms of assembly, complex I is composed of about 45 different subunits. This is a component of the iron-sulfur (IP) fragment of the enzyme.

The protein resides in the mitochondrion inner membrane. The enzyme catalyses a ubiquinone + NADH + 5 H(+)(in) = a ubiquinol + NAD(+) + 4 H(+)(out). Core subunit of the mitochondrial membrane respiratory chain NADH dehydrogenase (Complex I) that is believed to belong to the minimal assembly required for catalysis. Complex I functions in the transfer of electrons from NADH to the respiratory chain. The immediate electron acceptor for the enzyme is believed to be ubiquinone. The chain is NADH dehydrogenase [ubiquinone] iron-sulfur protein 3 (NAD9) from Solanum tuberosum (Potato).